We begin with the raw amino-acid sequence, 750 residues long: Photosystem I P700 chlorophyll a apoprotein A1 (750 aa).

8 consecutive transmembrane segments (helical) span residues 70–93, 156–179, 195–219, 291–309, 346–369, 385–411, 433–455, and 531–549; these read VFSA…FHGA, LYCT…FHYH, LNHH…HVSL, IIHH…GHMY, WHAQ…HHMY, LSLF…IFMV, AIIS…LYIH, and FLVH…LILL. [4Fe-4S] cluster contacts are provided by Cys573 and Cys582. Transmembrane regions (helical) follow at residues 589-610 and 664-686; these read HVFL…HFSW and LSAY…MFLF. His675 is a binding site for chlorophyll a'. The chlorophyll a site is built by Met683 and Tyr691. Trp692 provides a ligand contact to phylloquinone. Residues 724–744 traverse the membrane as a helical segment; that stretch reads AVGVTHYLLGGIATTWAFFLA.

Belongs to the PsaA/PsaB family. The PsaA/B heterodimer binds the P700 chlorophyll special pair and subsequent electron acceptors. PSI consists of a core antenna complex that captures photons, and an electron transfer chain that converts photonic excitation into a charge separation. The eukaryotic PSI reaction center is composed of at least 11 subunits. P700 is a chlorophyll a/chlorophyll a' dimer, A0 is one or more chlorophyll a, A1 is one or both phylloquinones and FX is a shared 4Fe-4S iron-sulfur center. is required as a cofactor.

It is found in the plastid. The protein resides in the chloroplast thylakoid membrane. The catalysed reaction is reduced [plastocyanin] + hnu + oxidized [2Fe-2S]-[ferredoxin] = oxidized [plastocyanin] + reduced [2Fe-2S]-[ferredoxin]. In terms of biological role, psaA and PsaB bind P700, the primary electron donor of photosystem I (PSI), as well as the electron acceptors A0, A1 and FX. PSI is a plastocyanin-ferredoxin oxidoreductase, converting photonic excitation into a charge separation, which transfers an electron from the donor P700 chlorophyll pair to the spectroscopically characterized acceptors A0, A1, FX, FA and FB in turn. Oxidized P700 is reduced on the lumenal side of the thylakoid membrane by plastocyanin. The protein is Photosystem I P700 chlorophyll a apoprotein A1 of Phaseolus vulgaris (Kidney bean).